Here is a 274-residue protein sequence, read N- to C-terminus: Uridine-5'-phosphate dioxygenase (274 aa).

Residues H103, D105, and H246 each contribute to the Fe cation site.

It depends on Fe(2+) as a cofactor.

It carries out the reaction UMP + 2-oxoglutarate + O2 = uridine-5'-aldehyde + succinate + phosphate + CO2. The protein operates within antibiotic biosynthesis. Its activity is regulated as follows. Inhibited by several divalent cations, including Zn(2+). Its function is as follows. Dioxygenase involved in the biosynthesis of the lipopeptidyl nucleoside antibiotic A-90289. Catalyzes the dephosphorylation and oxidation of UMP to generate uridine-5'-aldehyde, the first intermediate in the biosynthesis of A-90289. The chain is Uridine-5'-phosphate dioxygenase from Streptomyces sp.